The chain runs to 193 residues: CDP-diacylglycerol--glycerol-3-phosphate 3-phosphatidyltransferase (193 aa).

The next 4 membrane-spanning stretches (helical) occupy residues 8-28, 39-59, 88-108, and 157-177; these read ITLA…APFD, IPVA…TDWV, AALI…IVII, and LVSF…TVVS.

It belongs to the CDP-alcohol phosphatidyltransferase class-I family.

The protein resides in the cell membrane. The catalysed reaction is a CDP-1,2-diacyl-sn-glycerol + sn-glycerol 3-phosphate = a 1,2-diacyl-sn-glycero-3-phospho-(1'-sn-glycero-3'-phosphate) + CMP + H(+). The protein operates within phospholipid metabolism; phosphatidylglycerol biosynthesis; phosphatidylglycerol from CDP-diacylglycerol: step 1/2. In terms of biological role, this protein catalyzes the committed step to the synthesis of the acidic phospholipids. In Bacillus subtilis (strain 168), this protein is CDP-diacylglycerol--glycerol-3-phosphate 3-phosphatidyltransferase (pgsA).